A 137-amino-acid chain; its full sequence is 15 kDa protein A (137 aa).

A signal peptide spans 1–20; the sequence is MAGVWKVLVVLVGLAVVACA. Cystine bridges form between cysteine 77–cysteine 88 and cysteine 99–cysteine 116.

This sequence belongs to the cathelicidin family. As to expression, large granules of neutrophils.

It localises to the secreted. Its function is as follows. Binds to bacterial lipopolysaccharides (LPS), potentiates strongly the early antibacterial effects of BPI. Inhibits the late lethal action of BPI. The chain is 15 kDa protein A from Oryctolagus cuniculus (Rabbit).